The sequence spans 431 residues: 3-phosphoshikimate 1-carboxyvinyltransferase (431 aa).

Positions 23, 24, and 28 each coordinate 3-phosphoshikimate. Lys23 is a binding site for phosphoenolpyruvate. Residues Gly96 and Arg124 each coordinate phosphoenolpyruvate. Positions 169, 171, 317, and 344 each coordinate 3-phosphoshikimate. Gln171 serves as a coordination point for phosphoenolpyruvate. Asp317 (proton acceptor) is an active-site residue. The phosphoenolpyruvate site is built by Arg348 and Arg390.

It belongs to the EPSP synthase family. Monomer.

It localises to the cytoplasm. The enzyme catalyses 3-phosphoshikimate + phosphoenolpyruvate = 5-O-(1-carboxyvinyl)-3-phosphoshikimate + phosphate. It participates in metabolic intermediate biosynthesis; chorismate biosynthesis; chorismate from D-erythrose 4-phosphate and phosphoenolpyruvate: step 6/7. Its function is as follows. Catalyzes the transfer of the enolpyruvyl moiety of phosphoenolpyruvate (PEP) to the 5-hydroxyl of shikimate-3-phosphate (S3P) to produce enolpyruvyl shikimate-3-phosphate and inorganic phosphate. The sequence is that of 3-phosphoshikimate 1-carboxyvinyltransferase from Syntrophotalea carbinolica (strain DSM 2380 / NBRC 103641 / GraBd1) (Pelobacter carbinolicus).